The primary structure comprises 173 residues: Ribosome maturation factor RimM (173 aa).

One can recognise a PRC barrel domain in the interval 96-169 (PDEYYDHQLE…LVEIDPPEGL (74 aa)).

The protein belongs to the RimM family. As to quaternary structure, binds ribosomal protein uS19.

It is found in the cytoplasm. An accessory protein needed during the final step in the assembly of 30S ribosomal subunit, possibly for assembly of the head region. Essential for efficient processing of 16S rRNA. May be needed both before and after RbfA during the maturation of 16S rRNA. It has affinity for free ribosomal 30S subunits but not for 70S ribosomes. The protein is Ribosome maturation factor RimM of Mycobacterium sp. (strain JLS).